The primary structure comprises 55 residues: Large ribosomal subunit protein bL33 (55 aa).

The protein belongs to the bacterial ribosomal protein bL33 family.

This Renibacterium salmoninarum (strain ATCC 33209 / DSM 20767 / JCM 11484 / NBRC 15589 / NCIMB 2235) protein is Large ribosomal subunit protein bL33.